A 285-amino-acid polypeptide reads, in one-letter code: 1,4-dihydroxy-2-naphthoyl-CoA synthase (285 aa).

Substrate is bound by residues R45, 84-89 (SGGDQK), Y97, 129-133 (YSIGG), T155, S161, Y258, and K273. 154–156 (QTG) contacts hydrogencarbonate.

It belongs to the enoyl-CoA hydratase/isomerase family. MenB subfamily. In terms of assembly, homohexamer. Dimer of a homotrimer. Hydrogencarbonate is required as a cofactor.

It carries out the reaction 2-succinylbenzoyl-CoA + H(+) = 1,4-dihydroxy-2-naphthoyl-CoA + H2O. It functions in the pathway quinol/quinone metabolism; 1,4-dihydroxy-2-naphthoate biosynthesis; 1,4-dihydroxy-2-naphthoate from chorismate: step 6/7. It participates in quinol/quinone metabolism; menaquinone biosynthesis. Its activity is regulated as follows. Inhibited by sulfite and nitrate. In terms of biological role, converts o-succinylbenzoyl-CoA (OSB-CoA) to 1,4-dihydroxy-2-naphthoyl-CoA (DHNA-CoA). The polypeptide is 1,4-dihydroxy-2-naphthoyl-CoA synthase (Escherichia coli (strain K12)).